The primary structure comprises 274 residues: Isoprenyl transferase (274 aa).

The active site involves Asp-49. Mg(2+) is bound at residue Asp-49. Residues 50–53 (GNRR), Phe-54, Arg-62, His-66, and 94–96 (STD) contribute to the substrate site. The active-site Proton acceptor is the Asn-97. Substrate contacts are provided by residues Arg-100, Arg-223, and 229–231 (RLS). Glu-242 lines the Mg(2+) pocket.

The protein belongs to the UPP synthase family. As to quaternary structure, homodimer. It depends on Mg(2+) as a cofactor.

Functionally, catalyzes the condensation of isopentenyl diphosphate (IPP) with allylic pyrophosphates generating different type of terpenoids. This Deinococcus radiodurans (strain ATCC 13939 / DSM 20539 / JCM 16871 / CCUG 27074 / LMG 4051 / NBRC 15346 / NCIMB 9279 / VKM B-1422 / R1) protein is Isoprenyl transferase.